The primary structure comprises 603 residues: Myotubularin (603 aa).

2 positions are modified to phosphoserine: Ser13 and Ser18. Residues 29–97 (QDVSETVPRL…GVISRIEKMG (69 aa)) enclose the GRAM domain. The 376-residue stretch at 163 to 538 (GWTVYNPVEE…RHLELWVNYY (376 aa)) folds into the Myotubularin phosphatase domain. A 1,2-diacyl-sn-glycero-3-phospho-(1D-myo-inositol-3,5-bisphosphate) contacts are provided by Asn288, Asn313, and Ile314. Residues Asn288, Asn313, and Ile314 each coordinate a 1,2-diacyl-sn-glycero-3-phospho-(1D-myo-inositol-3-phosphate). The active-site Phosphocysteine intermediate is Cys375. Residues Ser376, Asp377, Gly378, Trp379, Asp380, Arg381, Lys417, and Arg421 each contribute to the a 1,2-diacyl-sn-glycero-3-phospho-(1D-myo-inositol-3,5-bisphosphate) site. A 1,2-diacyl-sn-glycero-3-phospho-(1D-myo-inositol-3-phosphate) is bound by residues Ser376, Asp377, Gly378, Trp379, Asp380, and Arg381. Residue Arg421 coordinates a 1,2-diacyl-sn-glycero-3-phospho-(1D-myo-inositol-3-phosphate). Thr495 carries the post-translational modification Phosphothreonine. A Phosphoserine modification is found at Ser588.

The protein belongs to the protein-tyrosine phosphatase family. Non-receptor class myotubularin subfamily. Heterodimer with MTMR12. Interacts with KMT2A/MLL1 (via SET domain). Interacts with DES in skeletal muscle but not in cardiac muscle. Interacts with SPEG. As to expression, widely expressed with highest levels detected in heart and muscle and low levels in brain (at protein level). Expressed in skeletal muscles (at protein level).

Its subcellular location is the cytoplasm. The protein localises to the cell membrane. The protein resides in the cell projection. It is found in the filopodium. It localises to the ruffle. Its subcellular location is the late endosome. The protein localises to the myofibril. The protein resides in the sarcomere. The enzyme catalyses a 1,2-diacyl-sn-glycero-3-phospho-(1D-myo-inositol-3-phosphate) + H2O = a 1,2-diacyl-sn-glycero-3-phospho-(1D-myo-inositol) + phosphate. The catalysed reaction is a 1,2-diacyl-sn-glycero-3-phospho-(1D-myo-inositol-3,5-bisphosphate) + H2O = a 1,2-diacyl-sn-glycero-3-phospho-(1D-myo-inositol-5-phosphate) + phosphate. It catalyses the reaction 1,2-dioctanoyl-sn-glycero-3-phospho-(1-D-myo-inositol-3-phosphate) + H2O = 1,2-dioctanoyl-sn-glycero-3-phospho-(1D-myo-inositol) + phosphate. It carries out the reaction 1,2-dioctanoyl-sn-glycero-3-phospho-(1D-myo-inositol-3,5-bisphosphate) + H2O = 1,2-dioctanoyl-sn-glycero-3-phospho-(1D-myo-inositol-5-phosphate) + phosphate. The enzyme catalyses 1,2-dihexadecanoyl-sn-glycero-3-phospho-(1D-myo-inositol-3,5-phosphate) + H2O = 1,2-dihexadecanoyl-sn-glycero-3-phospho-(1D-myo-inositol-5-phosphate) + phosphate. Allosterically activated by phosphatidylinositol 5-phosphate (PI5P). Its function is as follows. Lipid phosphatase which dephosphorylates phosphatidylinositol 3-monophosphate (PI3P) and phosphatidylinositol 3,5-bisphosphate (PI(3,5)P2). Has also been shown to dephosphorylate phosphotyrosine- and phosphoserine-containing peptides. Negatively regulates EGFR degradation through regulation of EGFR trafficking from the late endosome to the lysosome. Plays a role in vacuolar formation and morphology. Regulates desmin intermediate filament assembly and architecture. Plays a role in mitochondrial morphology and positioning. Required for skeletal muscle maintenance but not for myogenesis. In skeletal muscles, stabilizes MTMR12 protein levels. The protein is Myotubularin of Mus musculus (Mouse).